The following is a 232-amino-acid chain: Phosphatidylserine decarboxylase proenzyme (232 aa).

S190 serves as the catalytic Schiff-base intermediate with substrate; via pyruvic acid. S190 carries the post-translational modification Pyruvic acid (Ser); by autocatalysis.

Belongs to the phosphatidylserine decarboxylase family. PSD-A subfamily. Heterodimer of a large membrane-associated beta subunit and a small pyruvoyl-containing alpha subunit. Pyruvate serves as cofactor. In terms of processing, is synthesized initially as an inactive proenzyme. Formation of the active enzyme involves a self-maturation process in which the active site pyruvoyl group is generated from an internal serine residue via an autocatalytic post-translational modification. Two non-identical subunits are generated from the proenzyme in this reaction, and the pyruvate is formed at the N-terminus of the alpha chain, which is derived from the carboxyl end of the proenzyme. The post-translation cleavage follows an unusual pathway, termed non-hydrolytic serinolysis, in which the side chain hydroxyl group of the serine supplies its oxygen atom to form the C-terminus of the beta chain, while the remainder of the serine residue undergoes an oxidative deamination to produce ammonia and the pyruvoyl prosthetic group on the alpha chain.

It is found in the cell membrane. The catalysed reaction is a 1,2-diacyl-sn-glycero-3-phospho-L-serine + H(+) = a 1,2-diacyl-sn-glycero-3-phosphoethanolamine + CO2. The protein operates within phospholipid metabolism; phosphatidylethanolamine biosynthesis; phosphatidylethanolamine from CDP-diacylglycerol: step 2/2. Functionally, catalyzes the formation of phosphatidylethanolamine (PtdEtn) from phosphatidylserine (PtdSer). The chain is Phosphatidylserine decarboxylase proenzyme from Bartonella henselae (strain ATCC 49882 / DSM 28221 / CCUG 30454 / Houston 1) (Rochalimaea henselae).